A 353-amino-acid polypeptide reads, in one-letter code: D-alanine--D-alanine ligase (353 aa).

The ATP-grasp domain occupies 141–349 (KAAFAAAGLP…LEELVSQLVI (209 aa)). Residue 176–231 (EAKLKYPCFVKPANLGSSVGISKAQNRNELLIGLDKAASLDRRIVVEQGVSARELE) participates in ATP binding. Mg(2+) contacts are provided by Asp-302, Glu-316, and Asn-318.

The protein belongs to the D-alanine--D-alanine ligase family. It depends on Mg(2+) as a cofactor. Requires Mn(2+) as cofactor.

It is found in the cytoplasm. The enzyme catalyses 2 D-alanine + ATP = D-alanyl-D-alanine + ADP + phosphate + H(+). It functions in the pathway cell wall biogenesis; peptidoglycan biosynthesis. In terms of biological role, cell wall formation. This Prochlorococcus marinus (strain MIT 9313) protein is D-alanine--D-alanine ligase.